A 134-amino-acid chain; its full sequence is Small ribosomal subunit protein uS8c (134 aa).

It belongs to the universal ribosomal protein uS8 family. Part of the 30S ribosomal subunit.

It is found in the plastid. The protein resides in the chloroplast. Functionally, one of the primary rRNA binding proteins, it binds directly to 16S rRNA central domain where it helps coordinate assembly of the platform of the 30S subunit. This is Small ribosomal subunit protein uS8c (rps8) from Nicotiana tomentosiformis (Tobacco).